Here is a 691-residue protein sequence, read N- to C-terminus: Elongation factor G (691 aa).

The tr-type G domain maps to Glu8 to Ile282. GTP-binding positions include Ala17–Thr24, Asp81–His85, and Asn135–Asp138.

This sequence belongs to the TRAFAC class translation factor GTPase superfamily. Classic translation factor GTPase family. EF-G/EF-2 subfamily.

The protein resides in the cytoplasm. Its function is as follows. Catalyzes the GTP-dependent ribosomal translocation step during translation elongation. During this step, the ribosome changes from the pre-translocational (PRE) to the post-translocational (POST) state as the newly formed A-site-bound peptidyl-tRNA and P-site-bound deacylated tRNA move to the P and E sites, respectively. Catalyzes the coordinated movement of the two tRNA molecules, the mRNA and conformational changes in the ribosome. The chain is Elongation factor G from Thermosynechococcus vestitus (strain NIES-2133 / IAM M-273 / BP-1).